Consider the following 166-residue polypeptide: NAD(P)H-quinone oxidoreductase subunit I, chloroplastic (166 aa).

4Fe-4S ferredoxin-type domains follow at residues 55 to 84 and 95 to 124; these read GRIHFEFDKCIACEVCVRVCPIDLPVVDWK and LNYSIDFGICIFCGNCVEYCPTNCLSMTEE. Residues cysteine 64, cysteine 67, cysteine 70, cysteine 74, cysteine 104, cysteine 107, cysteine 110, and cysteine 114 each contribute to the [4Fe-4S] cluster site.

This sequence belongs to the complex I 23 kDa subunit family. NDH is composed of at least 16 different subunits, 5 of which are encoded in the nucleus. [4Fe-4S] cluster serves as cofactor.

The protein resides in the plastid. It localises to the chloroplast thylakoid membrane. The enzyme catalyses a plastoquinone + NADH + (n+1) H(+)(in) = a plastoquinol + NAD(+) + n H(+)(out). It carries out the reaction a plastoquinone + NADPH + (n+1) H(+)(in) = a plastoquinol + NADP(+) + n H(+)(out). Functionally, NDH shuttles electrons from NAD(P)H:plastoquinone, via FMN and iron-sulfur (Fe-S) centers, to quinones in the photosynthetic chain and possibly in a chloroplast respiratory chain. The immediate electron acceptor for the enzyme in this species is believed to be plastoquinone. Couples the redox reaction to proton translocation, and thus conserves the redox energy in a proton gradient. This chain is NAD(P)H-quinone oxidoreductase subunit I, chloroplastic, found in Hulsea algida (Pacific hulsea).